The following is a 293-amino-acid chain: N-acetylneuraminate lyase (293 aa).

Aceneuramate contacts are provided by S48 and S49. Y137 serves as the catalytic Proton donor. The active-site Schiff-base intermediate with substrate is K165. Residues T167, G189, D191, E192, and S208 each coordinate aceneuramate.

It belongs to the DapA family. NanA subfamily. As to quaternary structure, homotetramer.

The protein localises to the cytoplasm. It carries out the reaction aceneuramate = aldehydo-N-acetyl-D-mannosamine + pyruvate. It participates in amino-sugar metabolism; N-acetylneuraminate degradation; D-fructose 6-phosphate from N-acetylneuraminate: step 1/5. Catalyzes the reversible aldol cleavage of N-acetylneuraminic acid (sialic acid; Neu5Ac) to form pyruvate and N-acetylmannosamine (ManNAc) via a Schiff base intermediate. In Staphylococcus aureus (strain bovine RF122 / ET3-1), this protein is N-acetylneuraminate lyase.